A 669-amino-acid chain; its full sequence is Pre-mRNA-processing factor 39 (669 aa).

Residues 1-10 are compositionally biased toward basic and acidic residues; sequence MQNSHMDEYR. A disordered region spans residues 1 to 23; sequence MQNSHMDEYRNSSNGSTGNSSEV. Positions 11–23 are enriched in low complexity; the sequence is NSSNGSTGNSSEV. Residue Ser44 is modified to Phosphoserine. 7 HAT repeats span residues 109–141, 143–175, 183–218, 220–253, 333–365, 367–399, and 404–436; these read NHLM…LEKR, DNIK…FLKE, ETNN…WENE, GNLR…HVQN, TFEE…FEIE, GTHE…YMEN, and GVRH…QQGN. Positions 599–624 are enriched in basic and acidic residues; that stretch reads KEQDSLKRKAENGSEEPEEKKAHTED. The interval 599 to 634 is disordered; it reads KEQDSLKRKAENGSEEPEEKKAHTEDTTSSSTQMID. Polar residues predominate over residues 625–634; the sequence is TTSSSTQMID.

Belongs to the PRP39 family.

It localises to the nucleus. In terms of biological role, involved in pre-mRNA splicing. The polypeptide is Pre-mRNA-processing factor 39 (PRPF39) (Homo sapiens (Human)).